A 967-amino-acid chain; its full sequence is Regulator of G-protein signaling 3 (967 aa).

The 78-residue stretch at 18-95 folds into the PDZ domain; it reads QITIRRGKDG…EIILLVWRVV (78 aa). Residues 115-135 form a disordered region; sequence THDLLSPPNKREKNCTHGAPT. Omega-N-methylarginine is present on arginine 167. The disordered stretch occupies residues 389-705; it reads QLAATPTERK…EGGLSLRVQN (317 aa). Polar residues-rich tracts occupy residues 476–486, 512–549, and 577–597; these read LPSSKNPSPSQ, SPSS…TEVP, and SSAS…QGSL. Positions 650 to 676 are enriched in acidic residues; sequence GEDEDAEEGEEGEEGEEDEEDDTNDDN. The segment covering 677-687 has biased composition (basic and acidic residues); sequence YGDRNEAKRSS. Phosphoserine occurs at positions 713, 716, 748, and 777. The tract at residues 807-830 is disordered; that stretch reads FRRRNESPGAQPAGKADKTTKSFK. The span at 821-830 shows a compositional bias: basic and acidic residues; that stretch reads KADKTTKSFK. The RGS domain maps to 842–967; the sequence is SLEKLLLHKY…INQKKMSPPL (126 aa).

In terms of assembly, binds EFNB1 and EFNB2. Binds the GNB1-GNG2 heterodimer. Binds ESR1. Phosphorylated by cyclic GMP-dependent protein kinase. In terms of processing, ISGylated. In terms of tissue distribution, detected in kidney, uterus, ovary, heart, brain, spleen, lung and testis.

The protein localises to the cytoplasm. Its subcellular location is the membrane. The protein resides in the nucleus. Down-regulates signaling from heterotrimeric G-proteins by increasing the GTPase activity of the alpha subunits, thereby driving them into their inactive GDP-bound form. Down-regulates G-protein-mediated release of inositol phosphates and activation of MAP kinases. In Rattus norvegicus (Rat), this protein is Regulator of G-protein signaling 3 (Rgs3).